Reading from the N-terminus, the 188-residue chain is Cell division protein SepF (188 aa).

A compositionally biased stretch (polar residues) spans 152 to 162 (TSHDEASTPTV). Residues 152–188 (TSHDEASTPTVVSRDAEAEQQQEAAAAPSPAWGATAL) form a disordered region.

It belongs to the SepF family. As to quaternary structure, homodimer. Interacts with FtsZ.

The protein resides in the cytoplasm. Functionally, cell division protein that is part of the divisome complex and is recruited early to the Z-ring. Probably stimulates Z-ring formation, perhaps through the cross-linking of FtsZ protofilaments. Its function overlaps with FtsA. This Parasynechococcus marenigrum (strain WH8102) protein is Cell division protein SepF.